Consider the following 252-residue polypeptide: Diphthine synthase (252 aa).

S-adenosyl-L-methionine contacts are provided by residues L9, D85, V88, 113–114 (SI), L165, A202, and H227.

It belongs to the diphthine synthase family. In terms of assembly, homodimer.

It catalyses the reaction 2-[(3S)-amino-3-carboxypropyl]-L-histidyl-[translation elongation factor 2] + 3 S-adenosyl-L-methionine = diphthine-[translation elongation factor 2] + 3 S-adenosyl-L-homocysteine + 3 H(+). Its pathway is protein modification; peptidyl-diphthamide biosynthesis. Its function is as follows. S-adenosyl-L-methionine-dependent methyltransferase that catalyzes the trimethylation of the amino group of the modified target histidine residue in translation elongation factor 2 (EF-2), to form an intermediate called diphthine. The three successive methylation reactions represent the second step of diphthamide biosynthesis. This chain is Diphthine synthase, found in Methanospirillum hungatei JF-1 (strain ATCC 27890 / DSM 864 / NBRC 100397 / JF-1).